The sequence spans 121 residues: MNVLYNEYSAILTFFAISFSISTLILALSYFLNPQPSDQEKVSAYECGFNPFDDARATFDVRFYLVAILFLIFDLEISFLFPWSLVLGQLSIFGFWSMIVFLIILTLGFIYEWKKGALEWE.

A run of 3 helical transmembrane segments spans residues 11 to 31 (ILTFFAISFSISTLILALSYF), 63 to 83 (FYLVAILFLIFDLEISFLFPW), and 90 to 110 (LSIFGFWSMIVFLIILTLGFI).

Belongs to the complex I subunit 3 family.

The protein resides in the mitochondrion membrane. The catalysed reaction is a ubiquinone + NADH + 5 H(+)(in) = a ubiquinol + NAD(+) + 4 H(+)(out). Its function is as follows. Core subunit of the mitochondrial membrane respiratory chain NADH dehydrogenase (Complex I) that is believed to belong to the minimal assembly required for catalysis. Complex I functions in the transfer of electrons from NADH to the respiratory chain. The immediate electron acceptor for the enzyme is believed to be ubiquinone. This is NADH-ubiquinone oxidoreductase chain 3 (NAD3) from Porphyra purpurea (Red seaweed).